A 378-amino-acid polypeptide reads, in one-letter code: Metalloendoproteinase 2-MMP (378 aa).

Positions 1 to 20 (MRFCVFGFLSLFLIVSPASA) are cleaved as a signal peptide. A propeptide spans 21–154 (WFFPNSTAVP…SRTHLHAVKR (134 aa)) (activation peptide). Asparagine 25, asparagine 35, asparagine 46, asparagine 79, and asparagine 102 each carry an N-linked (GlcNAc...) asparagine glycan. The short motif at 118-125 (PRCGNPDV) is the Cysteine switch element. Cysteine 120 provides a ligand contact to Zn(2+). 3 N-linked (GlcNAc...) asparagine glycosylation sites follow: asparagine 127, asparagine 143, and asparagine 203. Residue histidine 280 coordinates Zn(2+). Glutamate 281 is a catalytic residue. Zn(2+) contacts are provided by histidine 284 and histidine 290. Residue asparagine 330 is glycosylated (N-linked (GlcNAc...) asparagine). Serine 349 carries the GPI-anchor amidated serine lipid modification. Residues 350–378 (AAWRIDGSSRSTIVSLLLSTVGLVLWFLP) constitute a propeptide, removed in mature form.

It belongs to the peptidase M10A family. Matrix metalloproteinases (MMPs) subfamily. Zn(2+) serves as cofactor. Mostly expressed in roots, and, to a lower extent, in flowers, leaves and stems.

The protein resides in the cell membrane. With respect to regulation, repressed by acetohydroxamic acid (AHA). Its function is as follows. Matrix metalloproteinases (MMPs) or matrixins may play a role in the degradation and remodeling of the extracellular matrix (ECM) during development or in response to stresses. Required for plant growth, morphogenesis, and development with particular relevance for flowering and senescence. Active on McaPLGLDpaAR-NH(2) (QF24) and myelin basic protein (MBP) and, to some extent, on beta-casein. In Arabidopsis thaliana (Mouse-ear cress), this protein is Metalloendoproteinase 2-MMP.